Here is a 158-residue protein sequence, read N- to C-terminus: Transcription elongation factor GreA (158 aa).

A coiled-coil region spans residues 3–75 (TEKTYPMTQE…TQLENMIRNA (73 aa)).

Belongs to the GreA/GreB family.

Necessary for efficient RNA polymerase transcription elongation past template-encoded arresting sites. The arresting sites in DNA have the property of trapping a certain fraction of elongating RNA polymerases that pass through, resulting in locked ternary complexes. Cleavage of the nascent transcript by cleavage factors such as GreA or GreB allows the resumption of elongation from the new 3'terminus. GreA releases sequences of 2 to 3 nucleotides. This is Transcription elongation factor GreA from Bacillus cytotoxicus (strain DSM 22905 / CIP 110041 / 391-98 / NVH 391-98).